Reading from the N-terminus, the 304-residue chain is Protein transport protein sec13 (304 aa).

WD repeat units lie at residues 12–51 (GHDD…QRLV), 56–97 (GHDG…WQRI), 102–143 (LHKA…WEHN), 147–203 (AHGL…NGYK), 211–253 (GHTD…PGEW), and 259–298 (NFDA…EWEN).

It belongs to the WD repeat SEC13 family. As to quaternary structure, the COPII coat is composed of at least 5 proteins: the sec23/24 complex, the sec13/31 complex, and the protein vtr-7/sar1. Component of the nuclear pore complex (NPC). NPC constitutes the exclusive means of nucleocytoplasmic transport. NPCs allow the passive diffusion of ions and small molecules and the active, nuclear transport receptor-mediated bidirectional transport of macromolecules such as proteins, RNAs, ribonucleoparticles (RNPs), and ribosomal subunits across the nuclear envelope. Due to its 8-fold rotational symmetry, all subunits are present with 8 copies or multiples thereof.

Its subcellular location is the cytoplasmic vesicle. The protein localises to the COPII-coated vesicle membrane. It is found in the endoplasmic reticulum membrane. It localises to the nucleus. The protein resides in the nuclear pore complex. In terms of biological role, component of the coat protein complex II (COPII) which promotes the formation of transport vesicles from the endoplasmic reticulum (ER). The coat has two main functions, the physical deformation of the endoplasmic reticulum membrane into vesicles and the selection of cargo molecules. It also functions as a component of the nuclear pore complex (NPC). NPC components, collectively referred to as nucleoporins (NUPs), can play the role of both NPC structural components and of docking or interaction partners for transiently associated nuclear transport factors. Nup-20/sec13 is required for efficient mRNA export from the nucleus to the cytoplasm and for correct nuclear pore biogenesis and distribution. In Neurospora crassa (strain ATCC 24698 / 74-OR23-1A / CBS 708.71 / DSM 1257 / FGSC 987), this protein is Protein transport protein sec13 (nup-20).